Here is an 872-residue protein sequence, read N- to C-terminus: Cilia- and flagella-associated protein 58 (872 aa).

2 coiled-coil regions span residues 106-595 (VDSA…ADGE) and 642-839 (ESQY…QKNK).

Belongs to the CFAP58 family. As to quaternary structure, interacts with ODFP2.

The protein localises to the cell projection. Its subcellular location is the cilium. The protein resides in the flagellum. It is found in the cytoplasm. It localises to the cytoskeleton. The protein localises to the microtubule organizing center. Its subcellular location is the centrosome. In terms of biological role, has an essential role in the assembly and organization of the sperm flagellar axoneme. Required for the elongation of the primary cilium and sperm flagellar midpiece via modulation of the Notch signaling pathway. This is Cilia- and flagella-associated protein 58 from Homo sapiens (Human).